Reading from the N-terminus, the 738-residue chain is Catalase-peroxidase (738 aa).

Residues 1–13 (MDGQDIGAGGGCP) are compositionally biased toward gly residues. Positions 1–26 (MDGQDIGAGGGCPFSGANTNKGRRSN) are disordered. The segment at residues 98–226 (WHSAGTYRTA…LAAVQMGLIY (129 aa)) is a cross-link (tryptophyl-tyrosyl-methioninium (Trp-Tyr) (with M-252)). H99 serves as the catalytic Proton acceptor. Residues 226–252 (YVNPEGPDGNPDPIASGRDIRETFARM) constitute a cross-link (tryptophyl-tyrosyl-methioninium (Tyr-Met) (with W-98)). Position 267 (H267) interacts with heme b.

It belongs to the peroxidase family. Peroxidase/catalase subfamily. In terms of assembly, homodimer or homotetramer. Requires heme b as cofactor. Formation of the three residue Trp-Tyr-Met cross-link is important for the catalase, but not the peroxidase activity of the enzyme.

The enzyme catalyses H2O2 + AH2 = A + 2 H2O. It catalyses the reaction 2 H2O2 = O2 + 2 H2O. Bifunctional enzyme with both catalase and broad-spectrum peroxidase activity. The chain is Catalase-peroxidase from Ruegeria sp. (strain TM1040) (Silicibacter sp.).